The following is a 283-amino-acid chain: Small ribosomal subunit protein uS2 (283 aa).

A disordered region spans residues 229-283 (RSAGKSGEQPAEAEPMPDWERELLEGDGAKTEAKAEEPKAEAKKADEAPEAEKSN). Basic and acidic residues predominate over residues 246–283 (DWERELLEGDGAKTEAKAEEPKAEAKKADEAPEAEKSN).

Belongs to the universal ribosomal protein uS2 family.

The protein is Small ribosomal subunit protein uS2 of Cutibacterium acnes (strain DSM 16379 / KPA171202) (Propionibacterium acnes).